We begin with the raw amino-acid sequence, 406 residues long: Argininosuccinate synthase (406 aa).

ATP-binding positions include 13 to 21 (AYSGGLDTS) and alanine 40. Positions 91 and 96 each coordinate L-citrulline. Glycine 121 is a binding site for ATP. The L-aspartate site is built by threonine 123, asparagine 127, and aspartate 128. L-citrulline is bound at residue asparagine 127. L-citrulline is bound by residues arginine 131, serine 180, serine 189, glutamate 265, and tyrosine 277.

The protein belongs to the argininosuccinate synthase family. Type 1 subfamily. Homotetramer.

It is found in the cytoplasm. It carries out the reaction L-citrulline + L-aspartate + ATP = 2-(N(omega)-L-arginino)succinate + AMP + diphosphate + H(+). It participates in amino-acid biosynthesis; L-arginine biosynthesis; L-arginine from L-ornithine and carbamoyl phosphate: step 2/3. The sequence is that of Argininosuccinate synthase from Syntrophotalea carbinolica (strain DSM 2380 / NBRC 103641 / GraBd1) (Pelobacter carbinolicus).